The sequence spans 164 residues: Flavodoxin (164 aa).

Residues 4 to 160 (IGIFFGTDSG…RISKWVEQVK (157 aa)) form the Flavodoxin-like domain.

This sequence belongs to the flavodoxin family. It depends on FMN as a cofactor.

In terms of biological role, low-potential electron donor to a number of redox enzymes. The chain is Flavodoxin (fldA) from Helicobacter pylori (strain ATCC 700392 / 26695) (Campylobacter pylori).